The chain runs to 133 residues: Small ribosomal subunit protein bS6 (133 aa).

The protein belongs to the bacterial ribosomal protein bS6 family.

Binds together with bS18 to 16S ribosomal RNA. This chain is Small ribosomal subunit protein bS6, found in Borrelia turicatae (strain 91E135).